A 599-amino-acid polypeptide reads, in one-letter code: Translation initiation factor IF-2 (599 aa).

The 168-residue stretch at 111-278 folds into the tr-type G domain; the sequence is PRPPIITVMG…SILLLAEILE (168 aa). The interval 120-127 is G1; that stretch reads GHVDHGKT. GTP is bound at residue 120–127; it reads GHVDHGKT. The segment at 145–149 is G2; the sequence is GITQH. The tract at residues 166–169 is G3; that stretch reads DTPG. GTP-binding positions include 166 to 170 and 220 to 223; these read DTPGH and NKMD. A G4 region spans residues 220 to 223; that stretch reads NKMD. Residues 256–258 form a G5 region; it reads SAL.

This sequence belongs to the TRAFAC class translation factor GTPase superfamily. Classic translation factor GTPase family. IF-2 subfamily.

Its subcellular location is the cytoplasm. One of the essential components for the initiation of protein synthesis. Protects formylmethionyl-tRNA from spontaneous hydrolysis and promotes its binding to the 30S ribosomal subunits. Also involved in the hydrolysis of GTP during the formation of the 70S ribosomal complex. The sequence is that of Translation initiation factor IF-2 from Mesomycoplasma hyopneumoniae (strain 232) (Mycoplasma hyopneumoniae).